The chain runs to 560 residues: Phenol regulator MopR (560 aa).

Residues histidine 106 and tryptophan 134 each coordinate phenol. The Zn(2+) site is built by cysteine 155, glutamate 178, cysteine 181, and cysteine 189. The Sigma-54 factor interaction domain maps to 245-474 (AVGESVAYRK…LENLLERATL (230 aa)). ATP is bound by residues 273–280 (GETGVGKE) and 336–345 (AHGGTIFLDE).

As to quaternary structure, homodimer.

Activity is triggered by phenol binding. Functionally, involved in the regulation of the phenol degradation pathway. Activates phenol hydroxylase expression in the presence of phenol. In Acinetobacter guillouiae (Acinetobacter genomosp. 11), this protein is Phenol regulator MopR.